Reading from the N-terminus, the 151-residue chain is Large ribosomal subunit protein bL9 (151 aa).

Belongs to the bacterial ribosomal protein bL9 family.

Its function is as follows. Binds to the 23S rRNA. This is Large ribosomal subunit protein bL9 from Acidobacterium capsulatum (strain ATCC 51196 / DSM 11244 / BCRC 80197 / JCM 7670 / NBRC 15755 / NCIMB 13165 / 161).